A 432-amino-acid polypeptide reads, in one-letter code: Gamma-glutamyl phosphate reductase (432 aa).

The protein belongs to the gamma-glutamyl phosphate reductase family.

Its subcellular location is the cytoplasm. It catalyses the reaction L-glutamate 5-semialdehyde + phosphate + NADP(+) = L-glutamyl 5-phosphate + NADPH + H(+). It participates in amino-acid biosynthesis; L-proline biosynthesis; L-glutamate 5-semialdehyde from L-glutamate: step 2/2. Its function is as follows. Catalyzes the NADPH-dependent reduction of L-glutamate 5-phosphate into L-glutamate 5-semialdehyde and phosphate. The product spontaneously undergoes cyclization to form 1-pyrroline-5-carboxylate. The polypeptide is Gamma-glutamyl phosphate reductase (Corynebacterium melassecola).